Consider the following 63-residue polypeptide: Large ribosomal subunit protein bL28 (63 aa).

This sequence belongs to the bacterial ribosomal protein bL28 family.

In Treponema denticola (strain ATCC 35405 / DSM 14222 / CIP 103919 / JCM 8153 / KCTC 15104), this protein is Large ribosomal subunit protein bL28.